Reading from the N-terminus, the 257-residue chain is Probable ABC transporter arginine-binding protein ArtJ (257 aa).

The N-terminal stretch at methionine 1–glycine 23 is a signal peptide. Asparagine 41, glutamate 48, glycine 100, serine 102, arginine 107, and tyrosine 151 together coordinate L-arginine.

It belongs to the bacterial solute-binding protein 3 family.

It is found in the secreted. The protein resides in the cell surface. Functionally, probably part of an ABC transporter complex involved in arginine transport. Binds arginine. Interacts with host epithelial cells, suggesting a role in host-cell adhesion during infection. The protein is Probable ABC transporter arginine-binding protein ArtJ of Chlamydia trachomatis serovar D (strain ATCC VR-885 / DSM 19411 / UW-3/Cx).